The primary structure comprises 487 residues: UPF0324 membrane protein NE0724 (487 aa).

11 helical membrane-spanning segments follow: residues 19 to 38 (WAVW…LWGW), 71 to 93 (PALS…AWSM), 100 to 119 (FFIG…IIGN), 139 to 161 (LSLG…GNFF), 181 to 200 (AIVF…AGFI), 204 to 226 (VMTG…YALG), 269 to 291 (VSIL…YTAI), 350 to 369 (IWID…VWVY), 389 to 411 (FPKF…SSGS), 426 to 443 (GPMR…IGII), and 456 to 478 (ALLY…AWIF).

It belongs to the UPF0324 family.

The protein localises to the cell membrane. The polypeptide is UPF0324 membrane protein NE0724 (Nitrosomonas europaea (strain ATCC 19718 / CIP 103999 / KCTC 2705 / NBRC 14298)).